A 23-amino-acid chain; its full sequence is Phallacidin proprotein (23 aa).

A propeptide is located at residue proline 1. The segment at residues alanine 2–proline 8 is a cross-link (cyclopeptide (Ala-Pro)). Residues tryptophan 3–cysteine 7 constitute a cross-link (2'-cysteinyl-6'-hydroxytryptophan sulfoxide (Trp-Cys)). The propeptide occupies cysteine 9 to lysine 23.

The protein belongs to the MSDIN fungal toxin family. Post-translationally, processed by the macrocyclase-peptidase enzyme POPB to yield a toxic cyclic heptapeptide. POPB first removes 10 residues from the N-terminus. Conformational trapping of the remaining peptide forces the enzyme to release this intermediate rather than proceed to macrocyclization. The enzyme rebinds the remaining peptide in a different conformation and catalyzes macrocyclization of the N-terminal 7 residues.

Functionally, major toxin that belongs to the bicyclic heptapeptides called phallotoxins. Although structurally related to amatoxins, phallotoxins have a different mode of action, which is the stabilization of F-actin. Phallotoxins are poisonous when administered parenterally, but not orally because of poor absorption. The chain is Phallacidin proprotein from Amanita rimosa.